The following is a 229-amino-acid chain: Ribonuclease T (229 aa).

An Exonuclease domain is found at 23-197 (VIIDVETAGF…YDTERTAELF (175 aa)). Mg(2+) is bound by residues aspartate 26, glutamate 28, histidine 184, and aspartate 189. Histidine 184 functions as the Proton donor/acceptor in the catalytic mechanism.

It belongs to the RNase T family. In terms of assembly, homodimer. Requires Mg(2+) as cofactor.

Trims short 3' overhangs of a variety of RNA species, leaving a one or two nucleotide 3' overhang. Responsible for the end-turnover of tRNA: specifically removes the terminal AMP residue from uncharged tRNA (tRNA-C-C-A). Also appears to be involved in tRNA biosynthesis. This Haemophilus influenzae (strain PittEE) protein is Ribonuclease T.